Reading from the N-terminus, the 66-residue chain is Large ribosomal subunit protein bL33c (66 aa).

Belongs to the bacterial ribosomal protein bL33 family.

Its subcellular location is the plastid. The protein localises to the chloroplast. The protein is Large ribosomal subunit protein bL33c of Angiopteris evecta (Mule's foot fern).